The sequence spans 179 residues: X-linked lymphocyte-regulated protein 5C (179 aa).

Positions 1–11 (MSNKEQKDMKK) are enriched in basic and acidic residues. Residues 1 to 75 (MSNKEQKDMK…MQDFKGDDGT (75 aa)) form a disordered region. The segment covering 42 to 53 (GTSGMGSHSSGS) has biased composition (low complexity). Basic and acidic residues predominate over residues 56 to 75 (QEAREPVQKKMQDFKGDDGT). A coiled-coil region spans residues 146–175 (ITQQQMKILQTAIEDHETKLKNAKDMCDTF).

This sequence belongs to the XLR/SYCP3 family. As to expression, expressed in testis (at protein level). Also expressed in ovary. Not detected in other tissues tested.

It is found in the nucleus. Its subcellular location is the chromosome. The polypeptide is X-linked lymphocyte-regulated protein 5C (Mus musculus (Mouse)).